The following is a 501-amino-acid chain: MPDTASYKQQKEDFVSNLSGGSVAEINYVTSVAAVAILLWSVLQARQSFFEPYTALAFAVDFLLNVGAILLSVTLYSNSPLLLNLLLIAPAILVFTLPPRSRSPKKKAKIPPNARSNESSGQLDILSTKPFLTNFRGCMLIVTCVAILAVDFRLFPRRFAKVETWGTSLMDLGVGSFVFSAGLVAARPVLREKATGRAGAVGNALSLSSRLVQSLRHSIPLLVLGFIRFLSVKGLDYAEHVTEYGVHWNFFFTLGFLPPFVAIFQSVRKLIPSFAALSLLVGVTYQVLLETTSLKAYVLTAPRTDLISMNREGIFSFVGYLAIFLAGQDTGMFVIPRNLVPKSTASPGAQRNKLLKITAVWGGVWTGLYVLSTNYHYGFGLAVSRRMANLPYVLWVVAFNTIQLLGFAVIDTIFFPAFYNAQDAKTEKEAYTHATSRVMRAYNRNGLAVFLLANLLTGLVNMTVNTLDATPIATMGILVVYSAALTGVAVALDAYNISIKL.

N-linked (GlcNAc...) asparagine glycosylation is present at Asn-17. 3 helical membrane-spanning segments follow: residues 23–43 (VAEINYVTSVAAVAILLWSVL), 55–75 (ALAFAVDFLLNVGAILLSVTL), and 79–99 (SPLLLNLLLIAPAILVFTLPP). The tract at residues 101–121 (SRSPKKKAKIPPNARSNESSG) is disordered. Asn-117 carries N-linked (GlcNAc...) asparagine glycosylation. 10 consecutive transmembrane segments (helical) span residues 130 to 150 (PFLTNFRGCMLIVTCVAILAV), 165 to 185 (WGTSLMDLGVGSFVFSAGLVA), 218 to 238 (SIPLLVLGFIRFLSVKGLDYA), 244 to 264 (YGVHWNFFFTLGFLPPFVAIF), 270 to 290 (LIPSFAALSLLVGVTYQVLLE), 314 to 334 (IFSFVGYLAIFLAGQDTGMFV), 363 to 383 (GVWTGLYVLSTNYHYGFGLAV), 390 to 410 (LPYVLWVVAFNTIQLLGFAVI), 447 to 467 (LAVFLLANLLTGLVNMTVNTL), and 472 to 492 (IATMGILVVYSAALTGVAVAL). N-linked (GlcNAc...) asparagine glycosylation is present at Asn-496.

The protein belongs to the PIGW family.

It is found in the endoplasmic reticulum membrane. It functions in the pathway glycolipid biosynthesis; glycosylphosphatidylinositol-anchor biosynthesis. In terms of biological role, probable acetyltransferase, which acetylates the inositol ring of phosphatidylinositol during biosynthesis of GPI-anchor. The protein is GPI-anchored wall transfer protein 1 (GWT1) of Gibberella zeae (strain ATCC MYA-4620 / CBS 123657 / FGSC 9075 / NRRL 31084 / PH-1) (Wheat head blight fungus).